A 196-amino-acid chain; its full sequence is Anthranilate synthase component 2 (196 aa).

Residues 3–196 (NIVFIDNFDS…IEWALEKNNA (194 aa)) enclose the Glutamine amidotransferase type-1 domain. An L-glutamine-binding site is contributed by 57–59 (GPG). Cys-84 (nucleophile; for GATase activity) is an active-site residue. Residues Gln-88 and 134–135 (SL) each bind L-glutamine. Residues His-170 and Glu-172 each act as for GATase activity in the active site.

In terms of assembly, heterotetramer consisting of two non-identical subunits: a beta subunit (TrpG) and a large alpha subunit (TrpE).

It catalyses the reaction chorismate + L-glutamine = anthranilate + pyruvate + L-glutamate + H(+). The protein operates within amino-acid biosynthesis; L-tryptophan biosynthesis; L-tryptophan from chorismate: step 1/5. Its function is as follows. Part of a heterotetrameric complex that catalyzes the two-step biosynthesis of anthranilate, an intermediate in the biosynthesis of L-tryptophan. In the first step, the glutamine-binding beta subunit (TrpG) of anthranilate synthase (AS) provides the glutamine amidotransferase activity which generates ammonia as a substrate that, along with chorismate, is used in the second step, catalyzed by the large alpha subunit of AS (TrpE) to produce anthranilate. In the absence of TrpG, TrpE can synthesize anthranilate directly from chorismate and high concentrations of ammonia. This chain is Anthranilate synthase component 2 (trpG), found in Vibrio parahaemolyticus serotype O3:K6 (strain RIMD 2210633).